A 207-amino-acid polypeptide reads, in one-letter code: Macrophage immunometabolism regulator (207 aa).

Met-1 bears the N-acetylmethionine mark. The segment at 1 to 41 (MEVDINGDSRSTLTTLPLPVAEGSSPGKAEAEKPRCSSTPC) is disordered. Residues Ser-25 and Ser-167 each carry the phosphoserine modification.

This sequence belongs to the UNC119-binding protein family. As to quaternary structure, interacts with UNC119 and UNC119B; interaction preferentially takes place when UNC119 and UNC119B are unliganded with myristoylated proteins. Highly expressed in photoreceptors.

It localises to the cytoplasm. The protein resides in the cell projection. Its subcellular location is the cilium. Its function is as follows. Regulates the macrophage function, by enhancing the resolution of inflammation and wound repair functions mediated by M2 macrophages. The regulation of macrophage function is, due at least in part, to its ability to inhibit glycolysis. May also play a role in trafficking of proteins via its interaction with UNC119 and UNC119B cargo adapters: may help the release of UNC119 and UNC119B cargo or the recycling of UNC119 and UNC119B. May play a role in ciliary membrane localization via its interaction with UNC119B and protein transport into photoreceptor cells. The polypeptide is Macrophage immunometabolism regulator (Mus musculus (Mouse)).